The following is a 316-amino-acid chain: Pantothenate kinase (316 aa).

Residue glycine 95–serine 102 participates in ATP binding.

The protein belongs to the prokaryotic pantothenate kinase family.

It is found in the cytoplasm. It carries out the reaction (R)-pantothenate + ATP = (R)-4'-phosphopantothenate + ADP + H(+). It functions in the pathway cofactor biosynthesis; coenzyme A biosynthesis; CoA from (R)-pantothenate: step 1/5. This is Pantothenate kinase from Shewanella sediminis (strain HAW-EB3).